A 214-amino-acid chain; its full sequence is Adenylate kinase (214 aa).

Glycine 10–threonine 15 provides a ligand contact to ATP. Residues serine 30 to valine 59 form an NMP region. Residues threonine 31, arginine 36, glutamine 57–valine 59, glycine 85–arginine 88, and glutamine 92 contribute to the AMP site. Positions glycine 122 to aspartate 159 are LID. Residues arginine 123 and threonine 132–tyrosine 133 each bind ATP. 2 residues coordinate AMP: arginine 156 and arginine 167. Residue lysine 200 participates in ATP binding.

It belongs to the adenylate kinase family. As to quaternary structure, monomer.

It localises to the cytoplasm. The catalysed reaction is AMP + ATP = 2 ADP. It functions in the pathway purine metabolism; AMP biosynthesis via salvage pathway; AMP from ADP: step 1/1. Functionally, catalyzes the reversible transfer of the terminal phosphate group between ATP and AMP. Plays an important role in cellular energy homeostasis and in adenine nucleotide metabolism. The protein is Adenylate kinase of Vibrio vulnificus (strain CMCP6).